A 1350-amino-acid chain; its full sequence is Zinc finger protein Xfin (1350 aa).

One can recognise a KRAB domain in the interval 1 to 58 (MEEPKCLQREMYKSVMTENYQCVLSLGYPIRKPEIVSMMEVGEELWSKNDSARPGQKE). Positions 47–68 (SKNDSARPGQKEVEGETPKESD) are disordered. C2H2-type zinc fingers lie at residues 108-130 (HICS…QRMH), 136-158 (HHCP…QRTH), 164-186 (YQCV…QRTH), 192-214 (YTCL…RRTH), 220-242 (YRCS…LRTH), 248-270 (YECP…KRTH), 276-298 (FRCS…MRKH), 326-348 (YSCS…QQTH), 354-376 (YLCS…FRTH), 382-404 (YQCA…LRTH), 410-432 (FKCS…QRTH), 438-460 (YKCS…QRIH), 466-488 (YKCT…QKVH), 503-525 (HKCS…SKLH), 531-553 (FQCA…IRVH), 559-581 (FKCL…WRIH), 587-609 (FPCY…HRTH), 615-637 (HKCS…SRTH), 643-665 (YPCT…QRIH), 671-693 (YHCT…RRTH), 699-721 (YRCP…LVVH), 750-772 (YPCT…LRTH), 778-800 (YPCN…LRTH), 806-828 (YHCP…QRTH), 834-856 (YTCS…MRTH), 862-884 (YKCE…QRIH), 890-912 (YHCP…QRIH), 918-940 (YPCG…LKCH), 988-1010 (FKCN…VRIH), 1016-1038 (YKCS…YRTH), 1044-1066 (YKCG…QRVH), 1136-1158 (YSCS…WRMH), 1164-1186 (YTCK…VRIH), 1192-1214 (YPCS…QRIH), 1220-1242 (YTCT…SRTH), 1248-1270 (YKCN…MRTH), and 1276-1298 (YGCN…QRMC).

It belongs to the krueppel C2H2-type zinc-finger protein family. Phosphorylated. Phosphorylation enhances RNA binding. Expressed in oocytes, and in specialized cell types such as neural retina cones in adults.

Its subcellular location is the cytoplasm. In terms of biological role, binds to poly-G sequences in RNA. May function in post-translational regulation processes. The polypeptide is Zinc finger protein Xfin (Xenopus laevis (African clawed frog)).